The primary structure comprises 338 residues: Ketol-acid reductoisomerase (NADP(+)) (338 aa).

Residues 3 to 183 enclose the KARI N-terminal Rossmann domain; that stretch reads IDVFYDDDAD…GGARAGVIPT (181 aa). Residues 26–29, Arg49, Ser52, Ser54, and 84–87 each bind NADP(+); these read YGSQ and DTSQ. His109 is a catalytic residue. Residue Gly135 coordinates NADP(+). Residues 184–329 enclose the KARI C-terminal knotted domain; sequence TFEAETVTDL…AKLRDLMSWV (146 aa). Mg(2+) is bound by residues Asp192, Glu196, Glu228, and Glu232. Ser253 contributes to the substrate binding site.

The protein belongs to the ketol-acid reductoisomerase family. Mg(2+) is required as a cofactor.

It carries out the reaction (2R)-2,3-dihydroxy-3-methylbutanoate + NADP(+) = (2S)-2-acetolactate + NADPH + H(+). It catalyses the reaction (2R,3R)-2,3-dihydroxy-3-methylpentanoate + NADP(+) = (S)-2-ethyl-2-hydroxy-3-oxobutanoate + NADPH + H(+). It participates in amino-acid biosynthesis; L-isoleucine biosynthesis; L-isoleucine from 2-oxobutanoate: step 2/4. It functions in the pathway amino-acid biosynthesis; L-valine biosynthesis; L-valine from pyruvate: step 2/4. Its function is as follows. Involved in the biosynthesis of branched-chain amino acids (BCAA). Catalyzes an alkyl-migration followed by a ketol-acid reduction of (S)-2-acetolactate (S2AL) to yield (R)-2,3-dihydroxy-isovalerate. In the isomerase reaction, S2AL is rearranged via a Mg-dependent methyl migration to produce 3-hydroxy-3-methyl-2-ketobutyrate (HMKB). In the reductase reaction, this 2-ketoacid undergoes a metal-dependent reduction by NADPH to yield (R)-2,3-dihydroxy-isovalerate. This chain is Ketol-acid reductoisomerase (NADP(+)), found in Corynebacterium jeikeium (strain K411).